The primary structure comprises 442 residues: D(2) dopamine receptor A (442 aa).

Over 1 to 31 the chain is Extracellular; sequence MDPQNLSMYNDDINNGTNGTAVDQKPHYNYY. Residues asparagine 5, asparagine 15, and asparagine 18 are each glycosylated (N-linked (GlcNAc...) asparagine). The chain crosses the membrane as a helical span at residues 32–54; it reads AMLLTLLVFVIVFGNVLVCIAVS. Residues 55 to 64 lie on the Cytoplasmic side of the membrane; it reads REKALQTTTN. Residues 65–87 form a helical membrane-spanning segment; the sequence is YLIVSLAVADLLVATLVMPWAVY. At 88–102 the chain is on the extracellular side; that stretch reads MEVVGEWRFSRIHCD. Residues cysteine 101 and cysteine 176 are joined by a disulfide bond. Residues 103-124 form a helical membrane-spanning segment; it reads IFVTLDVMMCTASILNLCAISI. The Cytoplasmic portion of the chain corresponds to 125 to 145; that stretch reads DRYTAVAMPMLYNTRYSSKRR. Residues 146 to 166 traverse the membrane as a helical segment; that stretch reads VTVMISVVWVLSFAISCPLLF. Residues 167 to 182 lie on the Extracellular side of the membrane; that stretch reads GLNNTGSKVCIIDNPA. Residues 183 to 207 form a helical membrane-spanning segment; the sequence is FVIYSSIVSFYVPFIVTLLVYVQIY. Over 208-372 the chain is Cytoplasmic; it reads IVLRKRRKRV…SQHKEKKATQ (165 aa). The interval 273–335 is disordered; sequence DMEMEMMSST…KNGHPKDSTK (63 aa). Over residues 304 to 318 the composition is skewed to polar residues; the sequence is ATSNQCKNASLTSPV. The span at 322-335 shows a compositional bias: basic and acidic residues; that stretch reads YKAEKNGHPKDSTK. A helical membrane pass occupies residues 373 to 394; sequence MLAIVLGVFIICWLPFFIIHIL. The Extracellular segment spans residues 395–408; sequence NMHCNCNIPQALYS. Cysteines 398 and 400 form a disulfide. Residues 409–430 form a helical membrane-spanning segment; sequence AFTWLGYVNSAVNPIIYTTFNV. The Cytoplasmic portion of the chain corresponds to 431–442; sequence EFRKAFIKILHC. Residue cysteine 442 is the site of S-palmitoyl cysteine attachment.

It belongs to the G-protein coupled receptor 1 family. Palmitoylated. Palmitoylation is probably required for proper localization to the plasma membrane and stability of the receptor. As to expression, brain; pituitary.

The protein localises to the cell membrane. It localises to the golgi apparatus membrane. In terms of biological role, this is one of the five types (D1 to D5) of receptors for dopamine. The activity of this receptor is mediated by G proteins which inhibits adenylyl cyclase. In Xenopus D2R is involved in the regulation of the melanotrope cells of the intermediate pituitary during background adaptation of the animal. This is D(2) dopamine receptor A (drd2-a) from Xenopus laevis (African clawed frog).